The chain runs to 253 residues: 3-deoxy-manno-octulosonate cytidylyltransferase (253 aa).

This sequence belongs to the KdsB family.

The protein localises to the cytoplasm. The catalysed reaction is 3-deoxy-alpha-D-manno-oct-2-ulosonate + CTP = CMP-3-deoxy-beta-D-manno-octulosonate + diphosphate. The protein operates within nucleotide-sugar biosynthesis; CMP-3-deoxy-D-manno-octulosonate biosynthesis; CMP-3-deoxy-D-manno-octulosonate from 3-deoxy-D-manno-octulosonate and CTP: step 1/1. Its pathway is bacterial outer membrane biogenesis; lipopolysaccharide biosynthesis. Activates KDO (a required 8-carbon sugar) for incorporation into bacterial lipopolysaccharide in Gram-negative bacteria. The protein is 3-deoxy-manno-octulosonate cytidylyltransferase of Acinetobacter baumannii (strain ATCC 17978 / DSM 105126 / CIP 53.77 / LMG 1025 / NCDC KC755 / 5377).